The chain runs to 477 residues: uncharacterized protein (477 aa).

Positions 1–18 are cleaved as a signal peptide; it reads MWTALVLVWISSVPLSRS. Over 19–427 the chain is Extracellular; the sequence is HTVPAVPRHL…DPLTPSLVNK (409 aa). N-linked (GlcNAc...) asparagine glycans are attached at residues asparagine 40, asparagine 51, and asparagine 77. Disordered stretches follow at residues 79-103, 239-366, and 378-398; these read TRVT…GTAD, GTIN…TGGP, and KATA…DVKV. Positions 85–97 are enriched in low complexity; sequence TTPHGTNTSTPTT. Polar residues-rich tracts occupy residues 253 to 288 and 298 to 309; these read PAKS…QPVH and PSNTTLEPNTPK. Asparagine 300 is a glycosylation site (N-linked (GlcNAc...) asparagine). Composition is skewed to low complexity over residues 310–326, 348–361, and 378–393; these read SVAS…QVQT, TSPT…LPTQ, and KATA…SRSS. The helical transmembrane segment at 428 to 448 threads the bilayer; sequence MFLLVVLIVGVTLFIAVLMMF. The Cytoplasmic portion of the chain corresponds to 449-477; it reads ALQAYESYKKKDYTQVDYLINGMYADSEM.

It localises to the cell membrane. It is found in the golgi apparatus. The protein localises to the trans-Golgi network membrane. This is an uncharacterized protein from Rattus norvegicus (Rat).